The sequence spans 698 residues: Protein let-99 (698 aa).

The DEP domain maps to 23–107; it reads FRSNLSLKTN…SESRIYLFMK (85 aa). 2 disordered regions span residues 115 to 188 and 653 to 672; these read PKPR…DDEI and ITRS…QASP. The span at 146-157 shows a compositional bias: basic residues; that stretch reads RPPKARLPRRLS. A compositionally biased stretch (basic and acidic residues) spans 178–188; that stretch reads HGFDDHKDDEI.

It localises to the cytoplasm. The protein resides in the cell cortex. Functionally, required for the proper orientation of spindles after the establishment of polarity. May play a role in interactions between the astral microtubules and the cortical cytoskeleton. Required for asymmetric forces on nuclei and spindles. Acts downstream of the PAR signaling as an intermediate that transduces polarity information to the machinery that positions the mitotic spindle, possibly by regulating force generation. Regulates gpr-1/2 asymmetric cortical localization during the first embryonic cell divisions. Acts antagonistically to the gpr-1/2 signaling pathway. Regulates mes-1 expression and/or localization pattern during early embryogenesis. In Caenorhabditis elegans, this protein is Protein let-99 (let-99).